The chain runs to 601 residues: Phosphomethylpyrimidine synthase (601 aa).

2 disordered regions span residues 1-31 and 100-141; these read MTNKDARTPASSQTGEALASPQGDQEAGKSI and AGRP…RDGQ. A compositionally biased stretch (basic and acidic residues) spans 100-112; that stretch reads AGRPVRPEDDGIK. Substrate-binding positions include Asn-208, Met-237, Tyr-266, His-302, 322 to 324, 363 to 366, and Glu-402; these read SRG and DGLR. His-406 serves as a coordination point for Zn(2+). Residue Tyr-429 participates in substrate binding. His-470 serves as a coordination point for Zn(2+). 3 residues coordinate [4Fe-4S] cluster: Cys-550, Cys-553, and Cys-558.

It belongs to the ThiC family. The cofactor is [4Fe-4S] cluster.

The enzyme catalyses 5-amino-1-(5-phospho-beta-D-ribosyl)imidazole + S-adenosyl-L-methionine = 4-amino-2-methyl-5-(phosphooxymethyl)pyrimidine + CO + 5'-deoxyadenosine + formate + L-methionine + 3 H(+). It functions in the pathway cofactor biosynthesis; thiamine diphosphate biosynthesis. Its function is as follows. Catalyzes the synthesis of the hydroxymethylpyrimidine phosphate (HMP-P) moiety of thiamine from aminoimidazole ribotide (AIR) in a radical S-adenosyl-L-methionine (SAM)-dependent reaction. The sequence is that of Phosphomethylpyrimidine synthase from Streptomyces avermitilis (strain ATCC 31267 / DSM 46492 / JCM 5070 / NBRC 14893 / NCIMB 12804 / NRRL 8165 / MA-4680).